The chain runs to 118 residues: Large ribosomal subunit protein bL19 (118 aa).

Belongs to the bacterial ribosomal protein bL19 family.

Functionally, this protein is located at the 30S-50S ribosomal subunit interface and may play a role in the structure and function of the aminoacyl-tRNA binding site. The chain is Large ribosomal subunit protein bL19 from Geotalea uraniireducens (strain Rf4) (Geobacter uraniireducens).